A 172-amino-acid chain; its full sequence is Small ribosomal subunit protein uS5 (172 aa).

The S5 DRBM domain occupies 7-70; it reads VVEHLVNVNR…QNAKKYMIEV (64 aa).

The protein belongs to the universal ribosomal protein uS5 family. Part of the 30S ribosomal subunit. Contacts proteins S4 and S8.

With S4 and S12 plays an important role in translational accuracy. Its function is as follows. Located at the back of the 30S subunit body where it stabilizes the conformation of the head with respect to the body. In Orientia tsutsugamushi (strain Boryong) (Rickettsia tsutsugamushi), this protein is Small ribosomal subunit protein uS5.